A 196-amino-acid chain; its full sequence is Holliday junction branch migration complex subunit RuvA (196 aa).

Residues 1–64 (MIDRLRGQLV…EDAMLLFGFA (64 aa)) are domain I. The tract at residues 65–143 (TREEREAFDA…AAAGGGGGVA (79 aa)) is domain II. Positions 144-153 (AGEGDGPFME) are flexible linker. A domain III region spans residues 153–196 (EAREALTGLGYSLEEAERALRDVPPQETVEQYIKAALRKIGGRR).

Belongs to the RuvA family. As to quaternary structure, homotetramer. Forms an RuvA(8)-RuvB(12)-Holliday junction (HJ) complex. HJ DNA is sandwiched between 2 RuvA tetramers; dsDNA enters through RuvA and exits via RuvB. An RuvB hexamer assembles on each DNA strand where it exits the tetramer. Each RuvB hexamer is contacted by two RuvA subunits (via domain III) on 2 adjacent RuvB subunits; this complex drives branch migration. In the full resolvosome a probable DNA-RuvA(4)-RuvB(12)-RuvC(2) complex forms which resolves the HJ.

Its subcellular location is the cytoplasm. In terms of biological role, the RuvA-RuvB-RuvC complex processes Holliday junction (HJ) DNA during genetic recombination and DNA repair, while the RuvA-RuvB complex plays an important role in the rescue of blocked DNA replication forks via replication fork reversal (RFR). RuvA specifically binds to HJ cruciform DNA, conferring on it an open structure. The RuvB hexamer acts as an ATP-dependent pump, pulling dsDNA into and through the RuvAB complex. HJ branch migration allows RuvC to scan DNA until it finds its consensus sequence, where it cleaves and resolves the cruciform DNA. The protein is Holliday junction branch migration complex subunit RuvA of Rubrobacter xylanophilus (strain DSM 9941 / JCM 11954 / NBRC 16129 / PRD-1).